A 387-amino-acid polypeptide reads, in one-letter code: Cytochrome b (387 aa).

The next 4 helical transmembrane spans lie at 32–52, 76–98, 113–133, and 179–199; these read FGSLLLLCLIIQIITGVTLAM, WLVRYLHSNTASAFFFLVYLHIG, VWAIGTVILIVMIVTAFLGYV, and FFALHYLLPFILVALVLMHLI. The heme b site is built by His-82 and His-96. Residues His-183 and His-197 each coordinate heme b. His-202 is an a ubiquinone binding site. 4 consecutive transmembrane segments (helical) span residues 226–246, 290–310, 322–342, and 349–369; these read YLFKDLITIFIFIFVLSSFVF, LLGVIAMFAAILAIMLLPITD, LSKFAFWVFVVNFLILMKLGA, and FIELGQLSTALYFGHFIIIVP.

The protein belongs to the cytochrome b family. In terms of assembly, fungal cytochrome b-c1 complex contains 10 subunits; 3 respiratory subunits, 2 core proteins and 5 low-molecular weight proteins. Cytochrome b-c1 complex is a homodimer. It depends on heme b as a cofactor.

Its subcellular location is the mitochondrion inner membrane. Functionally, component of the ubiquinol-cytochrome c reductase complex (complex III or cytochrome b-c1 complex) that is part of the mitochondrial respiratory chain. The b-c1 complex mediates electron transfer from ubiquinol to cytochrome c. Contributes to the generation of a proton gradient across the mitochondrial membrane that is then used for ATP synthesis. The sequence is that of Cytochrome b (COB) from Podospora anserina (strain S / ATCC MYA-4624 / DSM 980 / FGSC 10383) (Pleurage anserina).